The primary structure comprises 427 residues: Serine--tRNA ligase (427 aa).

An L-serine-binding site is contributed by Thr-229–Glu-231. Position 260–262 (Arg-260–Glu-262) interacts with ATP. Glu-283 serves as a coordination point for L-serine. Glu-347–Ser-350 is an ATP binding site. Position 383 (Ser-383) interacts with L-serine.

The protein belongs to the class-II aminoacyl-tRNA synthetase family. Type-1 seryl-tRNA synthetase subfamily. As to quaternary structure, homodimer. The tRNA molecule binds across the dimer.

The protein resides in the cytoplasm. It catalyses the reaction tRNA(Ser) + L-serine + ATP = L-seryl-tRNA(Ser) + AMP + diphosphate + H(+). The enzyme catalyses tRNA(Sec) + L-serine + ATP = L-seryl-tRNA(Sec) + AMP + diphosphate + H(+). The protein operates within aminoacyl-tRNA biosynthesis; selenocysteinyl-tRNA(Sec) biosynthesis; L-seryl-tRNA(Sec) from L-serine and tRNA(Sec): step 1/1. Functionally, catalyzes the attachment of serine to tRNA(Ser). Is also able to aminoacylate tRNA(Sec) with serine, to form the misacylated tRNA L-seryl-tRNA(Sec), which will be further converted into selenocysteinyl-tRNA(Sec). The protein is Serine--tRNA ligase of Oleidesulfovibrio alaskensis (strain ATCC BAA-1058 / DSM 17464 / G20) (Desulfovibrio alaskensis).